We begin with the raw amino-acid sequence, 519 residues long: Cilia- and flagella-associated protein 53 (519 aa).

Coiled-coil stretches lie at residues 80 to 107 (NRHL…LLES) and 210 to 339 (LAKE…QEEQ). The tract at residues 498-519 (TTAVHPFRRRDRRCSSSGGQMS) is disordered.

The protein belongs to the CFAP53 family.

It localises to the cytoplasm. The protein resides in the cytoskeleton. Its subcellular location is the cilium axoneme. It is found in the cilium basal body. Functionally, microtubule inner protein (MIP) part of the dynein-decorated doublet microtubules (DMTs) in cilia axoneme, which is required for motile cilia beating. Regulates motility patterns of both 9+0 and 9+2 motile cilia through differential localization and recruitment of axonemal dynein components. Required for cilium motility within the spinal canal and Kuppfer's vesicle and is involved in the establishment of left-right symmetry during embryogenesis. The chain is Cilia- and flagella-associated protein 53 from Danio rerio (Zebrafish).